The following is a 201-amino-acid chain: Prostamide/prostaglandin F synthase (201 aa).

Belongs to the peroxiredoxin-like PRXL2 family. Prostamide/prostaglandin F synthase subfamily.

It is found in the cytoplasm. It localises to the cytosol. The catalysed reaction is prostaglandin H2 + [thioredoxin]-dithiol = prostaglandin F2alpha + [thioredoxin]-disulfide. It carries out the reaction prostamide F2alpha + [thioredoxin]-disulfide = prostamide H2 + [thioredoxin]-dithiol. Catalyzes the reduction of prostaglandin-ethanolamide H(2) (prostamide H(2)) to prostamide F(2alpha) with NADPH as proton donor. Also able to reduce prostaglandin H(2) to prostaglandin F(2alpha). In Xenopus tropicalis (Western clawed frog), this protein is Prostamide/prostaglandin F synthase (prxl2b).